Consider the following 187-residue polypeptide: Small ribosomal subunit protein uS7 (187 aa).

This sequence belongs to the universal ribosomal protein uS7 family. In terms of assembly, part of the 30S ribosomal subunit.

In terms of biological role, one of the primary rRNA binding proteins, it binds directly to 16S rRNA where it nucleates assembly of the head domain of the 30S subunit. Is located at the subunit interface close to the decoding center. The polypeptide is Small ribosomal subunit protein uS7 (Methanosphaera stadtmanae (strain ATCC 43021 / DSM 3091 / JCM 11832 / MCB-3)).